The primary structure comprises 388 residues: Succinate--CoA ligase [ADP-forming] subunit beta (388 aa).

The 236-residue stretch at 9 to 244 (KQLFARYGLP…PSQEDSREAH (236 aa)) folds into the ATP-grasp domain. Residues lysine 46, 53-55 (GRG), glutamate 99, threonine 102, and glutamate 107 each bind ATP. The Mg(2+) site is built by asparagine 199 and aspartate 213. Substrate contacts are provided by residues asparagine 264 and 321 to 323 (GIV).

Belongs to the succinate/malate CoA ligase beta subunit family. In terms of assembly, heterotetramer of two alpha and two beta subunits. Mg(2+) serves as cofactor.

The catalysed reaction is succinate + ATP + CoA = succinyl-CoA + ADP + phosphate. It catalyses the reaction GTP + succinate + CoA = succinyl-CoA + GDP + phosphate. The protein operates within carbohydrate metabolism; tricarboxylic acid cycle; succinate from succinyl-CoA (ligase route): step 1/1. In terms of biological role, succinyl-CoA synthetase functions in the citric acid cycle (TCA), coupling the hydrolysis of succinyl-CoA to the synthesis of either ATP or GTP and thus represents the only step of substrate-level phosphorylation in the TCA. The beta subunit provides nucleotide specificity of the enzyme and binds the substrate succinate, while the binding sites for coenzyme A and phosphate are found in the alpha subunit. The polypeptide is Succinate--CoA ligase [ADP-forming] subunit beta (Pectobacterium carotovorum subsp. carotovorum (strain PC1)).